Reading from the N-terminus, the 391-residue chain is 3-ketoacyl-CoA thiolase (391 aa).

Catalysis depends on cysteine 95, which acts as the Acyl-thioester intermediate. Catalysis depends on proton acceptor residues histidine 347 and cysteine 377.

This sequence belongs to the thiolase-like superfamily. Thiolase family. As to quaternary structure, heterotetramer of two alpha chains (FadB) and two beta chains (FadA).

It localises to the cytoplasm. The enzyme catalyses an acyl-CoA + acetyl-CoA = a 3-oxoacyl-CoA + CoA. It functions in the pathway lipid metabolism; fatty acid beta-oxidation. Catalyzes the final step of fatty acid oxidation in which acetyl-CoA is released and the CoA ester of a fatty acid two carbons shorter is formed. This is 3-ketoacyl-CoA thiolase from Pseudomonas fluorescens (strain ATCC BAA-477 / NRRL B-23932 / Pf-5).